The following is a 987-amino-acid chain: Leucine--tRNA ligase (987 aa).

A 'HIGH' region motif is present at residues 69 to 80 (PYPSGKGLHVGH). Residues 760 to 764 (KMGKS) carry the 'KMSKS' region motif. Residue K763 participates in ATP binding.

Belongs to the class-I aminoacyl-tRNA synthetase family.

It localises to the cytoplasm. The enzyme catalyses tRNA(Leu) + L-leucine + ATP = L-leucyl-tRNA(Leu) + AMP + diphosphate. The sequence is that of Leucine--tRNA ligase from Bifidobacterium longum (strain NCC 2705).